Here is a 130-residue protein sequence, read N- to C-terminus: Transcription antitermination protein NusB (130 aa).

This sequence belongs to the NusB family.

Functionally, involved in transcription antitermination. Required for transcription of ribosomal RNA (rRNA) genes. Binds specifically to the boxA antiterminator sequence of the ribosomal RNA (rrn) operons. In Bacillus mycoides (strain KBAB4) (Bacillus weihenstephanensis), this protein is Transcription antitermination protein NusB.